We begin with the raw amino-acid sequence, 220 residues long: Putative respiratory nitrate reductase subunit Rieske (220 aa).

Positions 118-206 (KAPTLLVRHA…ITVSSEGYLI (89 aa)) constitute a Rieske domain. [2Fe-2S] cluster-binding residues include cysteine 151, histidine 153, cysteine 168, and histidine 171. An intrachain disulfide couples cysteine 156 to cysteine 170.

In terms of assembly, probable multiprotein complex; a catalytic heterodimer of an alpha and beta chain is proposed to associate with additional subunits involved in membrane attachment and electron transfer. It depends on [2Fe-2S] cluster as a cofactor.

It is found in the cell membrane. The respiratory membrane-bound nitrate reductase enzyme complex plays a role in generation of metabolic energy by using nitrate as a terminal electron acceptor during anaerobic conditions. Proposed Rieske subunit involved in a protonmotive Q-cycle mechanism-based electron transfer electrons to the beta subunit. The protein is Putative respiratory nitrate reductase subunit Rieske (narB) of Haloferax mediterranei (strain ATCC 33500 / DSM 1411 / JCM 8866 / NBRC 14739 / NCIMB 2177 / R-4) (Halobacterium mediterranei).